Reading from the N-terminus, the 32-residue chain is ATP synthase subunit O, mitochondrial (32 aa).

It belongs to the ATPase delta chain family. In terms of assembly, F-type ATPases have 2 components, CF(1) - the catalytic core - and CF(0) - the membrane proton channel. CF(1) has five subunits: alpha(3), beta(3), gamma(1), delta(1), epsilon(1). CF(0) has three main subunits: a, b and c.

It localises to the mitochondrion. The protein resides in the mitochondrion inner membrane. Functionally, mitochondrial membrane ATP synthase (F(1)F(0) ATP synthase or Complex V) produces ATP from ADP in the presence of a proton gradient across the membrane which is generated by electron transport complexes of the respiratory chain. F-type ATPases consist of two structural domains, F(1) - containing the extramembraneous catalytic core and F(0) - containing the membrane proton channel, linked together by a central stalk and a peripheral stalk. During catalysis, ATP synthesis in the catalytic domain of F(1) is coupled via a rotary mechanism of the central stalk subunits to proton translocation. Part of the complex F(0) domain and the peripheric stalk, which acts as a stator to hold the catalytic alpha(3)beta(3) subcomplex and subunit a/ATP6 static relative to the rotary elements. In Spinacia oleracea (Spinach), this protein is ATP synthase subunit O, mitochondrial.